Consider the following 563-residue polypeptide: Arginine--tRNA ligase (563 aa).

Positions 121–131 (PNIAKPFSIGH) match the 'HIGH' region motif.

This sequence belongs to the class-I aminoacyl-tRNA synthetase family. As to quaternary structure, monomer.

Its subcellular location is the cytoplasm. It catalyses the reaction tRNA(Arg) + L-arginine + ATP = L-arginyl-tRNA(Arg) + AMP + diphosphate. In Streptococcus pneumoniae (strain CGSP14), this protein is Arginine--tRNA ligase.